Here is a 206-residue protein sequence, read N- to C-terminus: Protein SUE1, mitochondrial (206 aa).

The transit peptide at M1–H24 directs the protein to the mitochondrion.

It localises to the mitochondrion envelope. Its function is as follows. Required for degradation of unstable forms of cytochrome c. The protein is Protein SUE1, mitochondrial of Saccharomyces cerevisiae (strain ATCC 204508 / S288c) (Baker's yeast).